A 484-amino-acid polypeptide reads, in one-letter code: Poly(A) polymerase alpha-B (484 aa).

A Nuclear localization signal 1 motif is present at residues 240 to 257; it reads RKQLHQLLPSHVLPKKKK. Disordered regions lie at residues 276-314, 326-356, and 375-484; these read SVDS…PVSL, VPQN…SSTP, and KPVT…RLNR. A Nuclear localization signal 2 motif is present at residues 392–407; sequence KRTSSPTNEESPKKTK. Basic and acidic residues predominate over residues 423 to 441; sequence EQNKLEPEELKEVHSEEKS. Residues 451 to 464 are compositionally biased toward low complexity; sequence SSQRSSSTDLSDIS.

Belongs to the poly(A) polymerase family. Monomer.

It is found in the nucleus. The catalysed reaction is RNA(n) + ATP = RNA(n)-3'-adenine ribonucleotide + diphosphate. Its function is as follows. Polymerase that creates the 3'-poly(A) tail of mRNA's. May acquire specificity through interaction with a cleavage and polyadenylation factor (CPSF). The protein is Poly(A) polymerase alpha-B (papola-b) of Xenopus laevis (African clawed frog).